We begin with the raw amino-acid sequence, 432 residues long: MSKIVKVIGREIIDSRGNPTVEAEVHLEGGFVGMAAAPSGASTGSREALELRDGDKSRFLGKGVTKAVGAVNGPIAQAIVGKDAKDQAGIDKIMIDLDGTENKSNFGANAILAVSLANAKAAAASKGMPLYEHIAELNGTPGKFSMPVPMMNIINGGEHADNNVDIQEFMIQPVGASSVKEAIRMGSEVFHHLAKVLKGKGMNTAVGDEGGYAPNLGSNAEALAVIAEAVKAAGYELGKDITLAMDCAASEFYKDGKYVLAGEGNKAFTSEEFTHFLEDLTKQYPIVSIEDGLDESDWDGFAYQTKVLGDKIQLVGDDLFVTNTKILKEGIEKGIANSILIKFNQIGSLTETLAAIKMAKDAGYTAVISHRSGETEDATIADLAVGTAAGQIKTGSMSRSDRVAKYNQLIRIEEALGEKAPYNGRREIKGQA.

Glutamine 167 is a binding site for (2R)-2-phosphoglycerate. Glutamate 209 functions as the Proton donor in the catalytic mechanism. Mg(2+)-binding residues include aspartate 246, glutamate 290, and aspartate 317. Residues lysine 342, arginine 371, serine 372, and lysine 393 each contribute to the (2R)-2-phosphoglycerate site. Lysine 342 acts as the Proton acceptor in catalysis.

It belongs to the enolase family. As to quaternary structure, component of the RNA degradosome, a multiprotein complex involved in RNA processing and mRNA degradation. It depends on Mg(2+) as a cofactor.

It is found in the cytoplasm. It localises to the secreted. Its subcellular location is the cell surface. The enzyme catalyses (2R)-2-phosphoglycerate = phosphoenolpyruvate + H2O. Its pathway is carbohydrate degradation; glycolysis; pyruvate from D-glyceraldehyde 3-phosphate: step 4/5. Functionally, catalyzes the reversible conversion of 2-phosphoglycerate (2-PG) into phosphoenolpyruvate (PEP). It is essential for the degradation of carbohydrates via glycolysis. This is Enolase from Cronobacter sakazakii (strain ATCC BAA-894) (Enterobacter sakazakii).